Consider the following 203-residue polypeptide: Large ribosomal subunit protein bL25 (203 aa).

The protein belongs to the bacterial ribosomal protein bL25 family. CTC subfamily. As to quaternary structure, part of the 50S ribosomal subunit; part of the 5S rRNA/L5/L18/L25 subcomplex. Contacts the 5S rRNA. Binds to the 5S rRNA independently of L5 and L18.

Functionally, this is one of the proteins that binds to the 5S RNA in the ribosome where it forms part of the central protuberance. The polypeptide is Large ribosomal subunit protein bL25 (Pseudomonas savastanoi pv. phaseolicola (strain 1448A / Race 6) (Pseudomonas syringae pv. phaseolicola (strain 1448A / Race 6))).